The following is a 416-amino-acid chain: Cysteate synthase (416 aa).

At K104 the chain carries N6-(pyridoxal phosphate)lysine. Residue N130 participates in pyridoxal 5'-phosphate binding.

This sequence belongs to the threonine synthase family. Cysteate synthase subfamily. Homotrimer. The cofactor is pyridoxal 5'-phosphate.

It carries out the reaction O-phospho-L-serine + sulfite + H(+) = L-cysteate + phosphate. It participates in cofactor biosynthesis; coenzyme M biosynthesis. Its function is as follows. Specifically catalyzes the beta-elimination of phosphate from L-phosphoserine and the beta-addition of sulfite to the dehydroalanine intermediate to produce L-cysteate. This chain is Cysteate synthase, found in Methanosarcina mazei (strain ATCC BAA-159 / DSM 3647 / Goe1 / Go1 / JCM 11833 / OCM 88) (Methanosarcina frisia).